An 88-amino-acid chain; its full sequence is Gene 86 protein (88 aa).

The segment at 64–88 is disordered; it reads WRGNPSAYDDEVGDLEGFETQHSDY. A compositionally biased stretch (acidic residues) spans 71-80; it reads YDDEVGDLEG.

In Mycobacterium (Mycobacteriophage L5), this protein is Gene 86 protein (86).